Reading from the N-terminus, the 359-residue chain is Serine/threonine-protein phosphatase 2A activator 2 (359 aa).

This sequence belongs to the PTPA-type PPIase family.

The protein localises to the cytoplasm. The enzyme catalyses [protein]-peptidylproline (omega=180) = [protein]-peptidylproline (omega=0). PPIases accelerate the folding of proteins. It catalyzes the cis-trans isomerization of proline imidic peptide bonds in oligopeptides. Acts as a regulatory subunit for PP2A-like phosphatases modulating their activity or substrate specificity, probably by inducing a conformational change in the catalytic subunit, a direct target of the PPIase. Can reactivate inactive phosphatase PP2A-phosphatase methylesterase complexes (PP2Ai) in presence of ATP and Mg(2+) by dissociating the inactive form from the complex. In Eremothecium gossypii (strain ATCC 10895 / CBS 109.51 / FGSC 9923 / NRRL Y-1056) (Yeast), this protein is Serine/threonine-protein phosphatase 2A activator 2 (RRD2).